The chain runs to 166 residues: MRLILLSGLLLLGIFLANGHEQDPDGKLLNSLIDALMHLQREFAKLRGAFLTVYKARSFGNGSERLYVTNKEIKNFEALRQICEQAGGHIPSPQLENQNKAFANVLERHNKEAYLVVGDSANFTNWAAGEPNKAAGACVKADTHGSWHSTSCDDNLLVVCEFYFIL.

An N-terminal signal peptide occupies residues 1–19 (MRLILLSGLLLLGIFLANG). The region spanning 46-161 (LRGAFLTVYK…CDDNLLVVCE (116 aa)) is the C-type lectin domain. N-linked (GlcNAc...) asparagine glycans are attached at residues Asn61 and Asn122. 2 cysteine pairs are disulfide-bonded: Cys83–Cys160 and Cys138–Cys152.

This sequence belongs to the alpha-type phospholipase A2 inhibitor family. As to quaternary structure, homotrimer; non-covalently linked. In terms of tissue distribution, expressed by the liver.

The protein resides in the secreted. Its function is as follows. This phospholipase A2 inhibitor binds directly phospholipase A2 in the presence or absence of calcium. The protein is Phospholipase A2 inhibitor of Bothrops alternatus (Urutu).